The chain runs to 319 residues: Protein-methionine-sulfoxide reductase catalytic subunit MsrP (319 aa).

Positions 1-40 form a signal peptide, tat-type signal; it reads MHKLNENDVTPEHIFFERRKIIQSMGLMGAASLLPRFSLA. Residues N73, 76-77, C131, T166, N218, R223, and 234-236 contribute to the Mo-molybdopterin site; these read YE and NIK.

It belongs to the MsrP family. Heterodimer of a catalytic subunit (MsrP) and a heme-binding subunit (MsrQ). Mo-molybdopterin is required as a cofactor. In terms of processing, predicted to be exported by the Tat system. The position of the signal peptide cleavage has not been experimentally proven.

It localises to the periplasm. The catalysed reaction is L-methionyl-[protein] + a quinone + H2O = L-methionyl-(S)-S-oxide-[protein] + a quinol. It carries out the reaction L-methionyl-[protein] + a quinone + H2O = L-methionyl-(R)-S-oxide-[protein] + a quinol. In terms of biological role, part of the MsrPQ system that repairs oxidized periplasmic proteins containing methionine sulfoxide residues (Met-O), using respiratory chain electrons. Thus protects these proteins from oxidative-stress damage caused by reactive species of oxygen and chlorine generated by the host defense mechanisms. MsrPQ is essential for the maintenance of envelope integrity under bleach stress, rescuing a wide series of structurally unrelated periplasmic proteins from methionine oxidation. The catalytic subunit MsrP is non-stereospecific, being able to reduce both (R-) and (S-) diastereoisomers of methionine sulfoxide. The polypeptide is Protein-methionine-sulfoxide reductase catalytic subunit MsrP (Pasteurella multocida (strain Pm70)).